The following is a 358-amino-acid chain: PDZ and LIM domain protein 3 (358 aa).

Positions 1-84 (MPQNVLLPGP…QLCLKIDRAE (84 aa)) constitute a PDZ domain. Disordered stretches follow at residues 126–155 (FILP…SVST) and 237–274 (DTEH…RAPV). The segment covering 129 to 146 (PGRSSGSSTPSGFDPGSG) has biased composition (low complexity). Residues 288 to 347 (PICDRCGNGIVGTVVKAKDKLRHPDCFVCSDCNLNLKQKGYFFVEGQLYCEAHARARMRP) enclose the LIM zinc-binding domain.

Its subcellular location is the cytoplasm. It is found in the myofibril. It localises to the sarcomere. The protein resides in the z line. Functionally, may play a role in the organization of actin filament arrays within muscle cells. In Xenopus laevis (African clawed frog), this protein is PDZ and LIM domain protein 3 (pdlim3).